The sequence spans 505 residues: Probable cytosol aminopeptidase (505 aa).

Mn(2+) is bound by residues Lys268 and Asp273. Residue Lys280 is part of the active site. Mn(2+)-binding residues include Asp291, Asp350, and Glu352. Arg354 is a catalytic residue.

This sequence belongs to the peptidase M17 family. Requires Mn(2+) as cofactor.

The protein resides in the cytoplasm. It carries out the reaction Release of an N-terminal amino acid, Xaa-|-Yaa-, in which Xaa is preferably Leu, but may be other amino acids including Pro although not Arg or Lys, and Yaa may be Pro. Amino acid amides and methyl esters are also readily hydrolyzed, but rates on arylamides are exceedingly low.. The catalysed reaction is Release of an N-terminal amino acid, preferentially leucine, but not glutamic or aspartic acids.. Presumably involved in the processing and regular turnover of intracellular proteins. Catalyzes the removal of unsubstituted N-terminal amino acids from various peptides. The chain is Probable cytosol aminopeptidase from Syntrophobacter fumaroxidans (strain DSM 10017 / MPOB).